Reading from the N-terminus, the 440-residue chain is Discs overgrown protein kinase (440 aa).

The Protein kinase domain occupies 9–277 (YRLGRKIGSG…HLRKLFRNLF (269 aa)). ATP-binding positions include 15 to 23 (IGSGSFGDI) and K38. D128 functions as the Proton acceptor in the catalytic mechanism. Residues 221 to 224 (KRQK) are nuclear localization signal; essential for interaction with Bdbt and important for nuclear localization. Residues S333 and S334 each carry the phosphoserine modification. The segment at 376–440 (SQLIGGNGLN…GGGGGVGNAK (65 aa)) is disordered. Gly residues predominate over residues 413–440 (QGGGGGGGGVGVGGMPSGGGGGGVGNAK).

The protein belongs to the protein kinase superfamily. CK1 Ser/Thr protein kinase family. Casein kinase I subfamily. In terms of assembly, forms a complex with per. Interacts with Dlish. Interacts (via nuclear localization signal) with Bdbt. As to expression, detected in the head (at protein level). Expressed in photoreceptor cells of the eyes as well as in the region situated between the optic lobe and the central brain.

It localises to the nucleus. The protein resides in the cytoplasm. It is found in the cytosol. It carries out the reaction L-seryl-[protein] + ATP = O-phospho-L-seryl-[protein] + ADP + H(+). The catalysed reaction is L-threonyl-[protein] + ATP = O-phospho-L-threonyl-[protein] + ADP + H(+). In terms of biological role, serine/threonine-protein kinase which is involved in the circadian rhythm pathway, viability and planar cell polarity. In the circadian rhythm pathway, phosphorylates the clock gene period (per) and targets it for degradation in the absence of timeless (tim), thus contributing to production of the circadian oscillations of the clock genes. Together with CkIalpha, regulates processing of ci by phosphorylating it, which promotes its binding to slmb, the F-box recognition component of the SCF(slmb) E3 ubiquitin-protein ligase. Involved in the inhibition of apoptosis during cell proliferation and growth arrest in imaginal disks. Also functions in planar cell polarity. This is Discs overgrown protein kinase (dco) from Drosophila melanogaster (Fruit fly).